Consider the following 933-residue polypeptide: Phosphoenolpyruvate carboxylase (933 aa).

Catalysis depends on residues histidine 158 and lysine 592.

It belongs to the PEPCase type 1 family. The cofactor is Mg(2+).

It carries out the reaction oxaloacetate + phosphate = phosphoenolpyruvate + hydrogencarbonate. Its function is as follows. Forms oxaloacetate, a four-carbon dicarboxylic acid source for the tricarboxylic acid cycle. The protein is Phosphoenolpyruvate carboxylase of Nitrosomonas europaea (strain ATCC 19718 / CIP 103999 / KCTC 2705 / NBRC 14298).